We begin with the raw amino-acid sequence, 249 residues long: MKILVSNDDGYQAQGIIELAQSLAQEHEVIVVAPSENKSAASSSLTLDKPLRPIQISNNVYCIDATPSDCVHLALCGFLNEEIDLVVTGINFGANLGDDVIYSGTVAGAIEGRFLGLPSLSISLASWRGQHFKTAGIVIRQLINQISHAHLSYGTVLNINVPDVIFSDIKGFQTTRLGKRHMSEQSVIDKNDSSLYWIGENGKEADNGVGTDFHAITNHYVSITPLQTDLTKYNEINTVSTWLNQIITT.

Aspartate 8, aspartate 9, serine 39, and asparagine 91 together coordinate a divalent metal cation.

It belongs to the SurE nucleotidase family. A divalent metal cation serves as cofactor.

The protein localises to the cytoplasm. It carries out the reaction a ribonucleoside 5'-phosphate + H2O = a ribonucleoside + phosphate. Functionally, nucleotidase that shows phosphatase activity on nucleoside 5'-monophosphates. This is 5'-nucleotidase SurE from Vesicomyosocius okutanii subsp. Calyptogena okutanii (strain HA).